The primary structure comprises 338 residues: Clavatol oxidase claD (338 aa).

One can recognise a Fe2OG dioxygenase domain in the interval Asp-193–Gly-299. Positions 222, 224, and 280 each coordinate Fe cation. Arg-290 is a 2-oxoglutarate binding site.

The protein belongs to the iron/ascorbate-dependent oxidoreductase family. The cofactor is Fe(2+).

The enzyme catalyses clavatol + 2-oxoglutarate + O2 = hydroxyclavatol + succinate + CO2. It functions in the pathway secondary metabolite biosynthesis. In terms of biological role, 2-oxoglutarate-dependent dioxygenase; part of the cla gene cluster that produces clavatol and ortho-quinone methide. The clavatol biosynthesis cluster cla and the terrestric acid cluster tra are both involved in the production of peniphenones and penilactones. The non-reducing PKS claF is responsible for the formation of clavatol from successive condensations of 3 malonyl-CoA units, presumably with a simple acetyl-CoA starter unit, and 2 methylation steps. The esterase claE probably collaborates with claF by catalyzing the hydrolysis of ACP-bound acyl intermediates to free the ACP from stalled intermediates. The clavatol oxidase claD then converts clavatol to hydroxyclavatol. Spontaneous dehydration of hydroxyclavatol leads to the accumulation of the highly active ortho-quinone methide. On the other hand, the PKS-NRPS hybrid traA is involved in the formation of crustosic acid, with the help of traB and traD. The polyketide synthase module (PKS) of traA is responsible for the synthesis of the polyketide backbone via the condensation of an acetyl-CoA starter unit with 3 malonyl-CoA units. The downstream nonribosomal peptide synthetase (NRPS) module then amidates the carboxyl end of the polyketide with L-malic acid. Because traA lacks a designated enoylreductase (ER) domain, the required activity is provided the enoyl reductase traG. Crustosic acid undergoes decarboxylation and isomerization to the terrestric acid, catalyzed by the 2-oxoglutarate-dependent dioxygenase traH. Both acids are further converted to the 2 gamma-butyrolactones (R)-5-methyltetronic acid and (S)-5-carboxylmethyltetronic acid, with involvement of the cytochrome P450 monooxygenase claJ. Spontaneous addition of the methide to these gamma-butyrolactones leads to peniphenone D and penilactone D, which undergo again stereospecific attacking by methide to give penilactones A and B. This is Clavatol oxidase claD from Penicillium crustosum (Blue mold fungus).